A 584-amino-acid chain; its full sequence is MQFGELVKTLAAVESTTQRTTMVKLLTSLFKKARPEEIDKIIYFVLGDLRPPWEGVELGVAEKLCLRAVSKATGVSISELEALYKKTGDVGEAARKALSTAKRPGLLAFGQQKPLEVSEVYDTLLKVAQASGEGAQDMKISLLASLFAKASPEEAKYIARFVVGKLRLGVADMTLIEALSDAFGVDKEALERAYHIYPDLGKLARHVAEGRPLEEIKITPGVPVLPMLAQRLSSSSEILAKLGGSAICEYKYDGERAQIHLKEGVVKIFSRRLEDITHAYPDVVKAVREAVSAREAILEGEIVAIDPDTGDMLPFQELMHRKRKHEVAVAVEMYPVVLNLFDLLYIDGEDLTNEPLIYRRVRLSEVVQETEKVSIAKWRVFDDAEEIDVFFHEAVSLGMEGLVCKSPTSVYEMGARGWNWIKYKRDYKSEMIDTVDLVVVGAFYGRGKRAGLYGAFLLAAYDPATDMFYTVCKVGSGFTDADLKKMYEMLQPYKIPHRHPRVVSKMEPDVWFTPQVVIEVIGAEITLSPLHTCCLGAVKPGVGLAIRFPRFTGRYRTDKSPEQATTVSEMIELYKRQKKVAQPE.

ATP is bound at residue Glu-249. Lys-251 acts as the N6-AMP-lysine intermediate in catalysis. Arg-256, Arg-271, Glu-301, Phe-341, Arg-416, and Lys-422 together coordinate ATP.

Belongs to the ATP-dependent DNA ligase family. Requires Mg(2+) as cofactor.

The enzyme catalyses ATP + (deoxyribonucleotide)n-3'-hydroxyl + 5'-phospho-(deoxyribonucleotide)m = (deoxyribonucleotide)n+m + AMP + diphosphate.. Functionally, DNA ligase that seals nicks in double-stranded DNA during DNA replication, DNA recombination and DNA repair. The sequence is that of DNA ligase from Pyrobaculum islandicum (strain DSM 4184 / JCM 9189 / GEO3).